The chain runs to 392 residues: Chorismate synthase (392 aa).

Positions 40 and 46 each coordinate NADP(+). Residues 135–137 (RAS), 256–257 (QA), glycine 300, 315–319 (KPISS), and arginine 341 contribute to the FMN site.

This sequence belongs to the chorismate synthase family. In terms of assembly, homotetramer. The cofactor is FMNH2.

The catalysed reaction is 5-O-(1-carboxyvinyl)-3-phosphoshikimate = chorismate + phosphate. It participates in metabolic intermediate biosynthesis; chorismate biosynthesis; chorismate from D-erythrose 4-phosphate and phosphoenolpyruvate: step 7/7. Functionally, catalyzes the anti-1,4-elimination of the C-3 phosphate and the C-6 proR hydrogen from 5-enolpyruvylshikimate-3-phosphate (EPSP) to yield chorismate, which is the branch point compound that serves as the starting substrate for the three terminal pathways of aromatic amino acid biosynthesis. This reaction introduces a second double bond into the aromatic ring system. The protein is Chorismate synthase of Salinispora tropica (strain ATCC BAA-916 / DSM 44818 / JCM 13857 / NBRC 105044 / CNB-440).